Reading from the N-terminus, the 105-residue chain is Large ribosomal subunit protein bL21 (105 aa).

The protein belongs to the bacterial ribosomal protein bL21 family. As to quaternary structure, part of the 50S ribosomal subunit. Contacts protein L20.

Functionally, this protein binds to 23S rRNA in the presence of protein L20. The sequence is that of Large ribosomal subunit protein bL21 from Blochmanniella pennsylvanica (strain BPEN).